A 714-amino-acid polypeptide reads, in one-letter code: GATA zinc finger domain-containing protein 10 (714 aa).

Disordered regions lie at residues Y28 to I97, T115 to Q180, M266 to Q362, Q394 to D419, M454 to Q476, and I528 to T621. Low complexity-rich tracts occupy residues Q30–N94 and Q130–H147. A compositionally biased stretch (basic residues) spans Q148 to Q168. Residues H169–Q180 are compositionally biased toward low complexity. The span at G271 to Y282 shows a compositional bias: polar residues. Composition is skewed to low complexity over residues N283–I322 and Q340–Q362. Composition is skewed to low complexity over residues Q457–Q476 and I528–N549. Positions G550–S569 are enriched in polar residues. Low complexity predominate over residues N570–N588. A GATA-type zinc finger spans residues C631 to C656. A coiled-coil region spans residues A661 to D694. Basic and acidic residues predominate over residues L667–I693. Residues L667–N714 are disordered. The span at N699–N714 shows a compositional bias: polar residues.

This Dictyostelium discoideum (Social amoeba) protein is GATA zinc finger domain-containing protein 10 (gtaJ).